The chain runs to 200 residues: Large ribosomal subunit protein uL29 (200 aa).

The segment at 1–107 is large ribosomal subunit protein uL29; the sequence is MTIAKELKQK…KQETKKAEVK (107 aa). The interval 92–200 is disordered; that stretch reads STKPESKQET…KMIKTKEKKQ (109 aa). Residues 93-179 show a composition bias toward basic and acidic residues; it reads TKPESKQETK…QEVKKVEAKK (87 aa). The tract at residues 108 to 200 is unknown; the sequence is PKVESKPESK…KMIKTKEKKQ (93 aa). Residues 186 to 200 are compositionally biased toward basic residues; sequence KPVKAKMIKTKEKKQ.

This sequence belongs to the universal ribosomal protein uL29 family.

In Mycoplasma genitalium (strain ATCC 33530 / DSM 19775 / NCTC 10195 / G37) (Mycoplasmoides genitalium), this protein is Large ribosomal subunit protein uL29.